The sequence spans 1242 residues: Receptor-type adenylate cyclase GRESAG 4.1 (1242 aa).

The Cytoplasmic portion of the chain corresponds to 1–39 (MHWQEGGGRGCVYTHGNCRRNLTARALQALQHVEALTCH). The helical transmembrane segment at 40-60 (YCVSLLHLLPLLLMWMPPVCA) threads the bilayer. Over 61 to 862 (DDSAVTVNVL…THTVTDSWNN (802 aa)) the chain is Extracellular. N-linked (GlcNAc...) asparagine glycans are attached at residues asparagine 116, asparagine 289, asparagine 318, asparagine 338, asparagine 401, asparagine 534, asparagine 563, asparagine 603, asparagine 702, asparagine 741, and asparagine 818. Residues 863–883 (FWVCIRLVIIYCPWCVPTHLP) traverse the membrane as a helical segment. The Cytoplasmic segment spans residues 884 to 1242 (AERRNNNRAP…PFYDMHLQEY (359 aa)). The Guanylate cyclase domain maps to 901–1056 (TLIFTDIESS…RTPNMAARTE (156 aa)). Residues aspartate 906 and aspartate 949 each coordinate Mg(2+).

This sequence belongs to the adenylyl cyclase class-3 family. Mg(2+) is required as a cofactor.

It localises to the membrane. The catalysed reaction is ATP = 3',5'-cyclic AMP + diphosphate. Its function is as follows. Could act as a receptor for an unknown ligand. The sequence is that of Receptor-type adenylate cyclase GRESAG 4.1 (GRESAG 4.1) from Trypanosoma brucei brucei.